The primary structure comprises 557 residues: Dihydroxy-acid dehydratase (557 aa).

Residue Asp78 participates in Mg(2+) binding. Cys119 contributes to the [2Fe-2S] cluster binding site. Asp120 and Lys121 together coordinate Mg(2+). Lys121 carries the post-translational modification N6-carboxylysine. Position 191 (Cys191) interacts with [2Fe-2S] cluster. Glu442 is a binding site for Mg(2+). The active-site Proton acceptor is Ser468.

Belongs to the IlvD/Edd family. As to quaternary structure, homodimer. The cofactor is [2Fe-2S] cluster. Requires Mg(2+) as cofactor.

The catalysed reaction is (2R)-2,3-dihydroxy-3-methylbutanoate = 3-methyl-2-oxobutanoate + H2O. It catalyses the reaction (2R,3R)-2,3-dihydroxy-3-methylpentanoate = (S)-3-methyl-2-oxopentanoate + H2O. It participates in amino-acid biosynthesis; L-isoleucine biosynthesis; L-isoleucine from 2-oxobutanoate: step 3/4. The protein operates within amino-acid biosynthesis; L-valine biosynthesis; L-valine from pyruvate: step 3/4. Functionally, functions in the biosynthesis of branched-chain amino acids. Catalyzes the dehydration of (2R,3R)-2,3-dihydroxy-3-methylpentanoate (2,3-dihydroxy-3-methylvalerate) into 2-oxo-3-methylpentanoate (2-oxo-3-methylvalerate) and of (2R)-2,3-dihydroxy-3-methylbutanoate (2,3-dihydroxyisovalerate) into 2-oxo-3-methylbutanoate (2-oxoisovalerate), the penultimate precursor to L-isoleucine and L-valine, respectively. This chain is Dihydroxy-acid dehydratase, found in Syntrophobacter fumaroxidans (strain DSM 10017 / MPOB).